A 433-amino-acid chain; its full sequence is Energy-coupling factor transporter ATP-binding protein EcfA2 (433 aa).

Residues 25 to 389 form the ABC transporter domain; it reads VRVKNLYAVY…QHIINSTSIQ (365 aa). 62-69 provides a ligand contact to ATP; the sequence is GNSGSGKS.

This sequence belongs to the ABC transporter superfamily. Energy-coupling factor EcfA family. Forms a stable energy-coupling factor (ECF) transporter complex composed of 2 membrane-embedded substrate-binding proteins (S component), 2 ATP-binding proteins (A component) and 2 transmembrane proteins (T component).

Its subcellular location is the cell membrane. In terms of biological role, ATP-binding (A) component of a common energy-coupling factor (ECF) ABC-transporter complex. Unlike classic ABC transporters this ECF transporter provides the energy necessary to transport a number of different substrates. This Ureaplasma parvum serovar 3 (strain ATCC 700970) protein is Energy-coupling factor transporter ATP-binding protein EcfA2.